A 375-amino-acid polypeptide reads, in one-letter code: Dehydrodolichyl diphosphate synthase complex subunit NUS1 (375 aa).

The segment covering 1–28 has biased composition (basic and acidic residues); the sequence is MPTMIKKDDKAMEPPNEKPHRKIERDDV. The segment at 1 to 48 is disordered; that stretch reads MPTMIKKDDKAMEPPNEKPHRKIERDDVPESSNHIPPPESGVLKGGKV. A helical membrane pass occupies residues 97–119; the sequence is YLFYKFLLVLLYICFGLFRYGQY.

This sequence belongs to the UPP synthase family. As to quaternary structure, forms an active dehydrodolichyl diphosphate synthase complex with either SRT1 or RER2. Mg(2+) serves as cofactor.

The protein localises to the endoplasmic reticulum membrane. It localises to the lipid droplet. The protein resides in the nucleus membrane. It catalyses the reaction n isopentenyl diphosphate + (2E,6E)-farnesyl diphosphate = a di-trans,poly-cis-polyprenyl diphosphate + n diphosphate. It functions in the pathway protein modification; protein glycosylation. In terms of biological role, with SRT1 or RER2, forms the dehydrodolichyl diphosphate synthase (DDS) complex, an essential component of the dolichol monophosphate (Dol-P) biosynthetic machinery. Adds multiple copies of isopentenyl pyrophosphate (IPP) to farnesyl pyrophosphate (FPP) to produce dehydrodolichyl diphosphate (Dedol-PP), a precursor of dolichol which is utilized as a sugar carrier in protein glycosylation in the endoplasmic reticulum (ER). In Saccharomyces cerevisiae (strain ATCC 204508 / S288c) (Baker's yeast), this protein is Dehydrodolichyl diphosphate synthase complex subunit NUS1 (NUS1).